A 267-amino-acid chain; its full sequence is GTP cyclohydrolase MptA (267 aa).

Belongs to the GTP cyclohydrolase IV family. Homodimer. Requires Fe(2+) as cofactor.

It catalyses the reaction GTP + H2O = 7,8-dihydroneopterin 2',3'-cyclic phosphate + formate + diphosphate + H(+). Its pathway is cofactor biosynthesis; 5,6,7,8-tetrahydromethanopterin biosynthesis. Converts GTP to 7,8-dihydro-D-neopterin 2',3'-cyclic phosphate, the first intermediate in the biosynthesis of coenzyme methanopterin. The sequence is that of GTP cyclohydrolase MptA from Pyrococcus furiosus (strain ATCC 43587 / DSM 3638 / JCM 8422 / Vc1).